A 75-amino-acid chain; its full sequence is uncharacterized protein (75 aa).

This is an uncharacterized protein from Saccharomyces cerevisiae (strain ATCC 204508 / S288c) (Baker's yeast).